We begin with the raw amino-acid sequence, 269 residues long: 3-deoxy-manno-octulosonate cytidylyltransferase (269 aa).

Belongs to the KdsB family.

Its subcellular location is the cytoplasm. The enzyme catalyses 3-deoxy-alpha-D-manno-oct-2-ulosonate + CTP = CMP-3-deoxy-beta-D-manno-octulosonate + diphosphate. Its pathway is nucleotide-sugar biosynthesis; CMP-3-deoxy-D-manno-octulosonate biosynthesis; CMP-3-deoxy-D-manno-octulosonate from 3-deoxy-D-manno-octulosonate and CTP: step 1/1. The protein operates within bacterial outer membrane biogenesis; lipopolysaccharide biosynthesis. Its function is as follows. Activates KDO (a required 8-carbon sugar) for incorporation into bacterial lipopolysaccharide in Gram-negative bacteria. This chain is 3-deoxy-manno-octulosonate cytidylyltransferase, found in Cupriavidus necator (strain ATCC 17699 / DSM 428 / KCTC 22496 / NCIMB 10442 / H16 / Stanier 337) (Ralstonia eutropha).